A 262-amino-acid chain; its full sequence is Hydroxyethylthiazole kinase (262 aa).

M43 is a substrate binding site. 2 residues coordinate ATP: R118 and T164. Residue A191 coordinates substrate.

The protein belongs to the Thz kinase family. Requires Mg(2+) as cofactor.

The catalysed reaction is 5-(2-hydroxyethyl)-4-methylthiazole + ATP = 4-methyl-5-(2-phosphooxyethyl)-thiazole + ADP + H(+). It functions in the pathway cofactor biosynthesis; thiamine diphosphate biosynthesis; 4-methyl-5-(2-phosphoethyl)-thiazole from 5-(2-hydroxyethyl)-4-methylthiazole: step 1/1. Its function is as follows. Catalyzes the phosphorylation of the hydroxyl group of 4-methyl-5-beta-hydroxyethylthiazole (THZ). The sequence is that of Hydroxyethylthiazole kinase from Cereibacter sphaeroides (strain ATCC 17023 / DSM 158 / JCM 6121 / CCUG 31486 / LMG 2827 / NBRC 12203 / NCIMB 8253 / ATH 2.4.1.) (Rhodobacter sphaeroides).